The following is an 85-amino-acid chain: Scratcher peptide (85 aa).

Positions 1–24 are cleaved as a signal peptide; the sequence is MTSVQSVTCCCLLWLMLSVQPITP. The propeptide occupies 25–38; that stretch reads GSPGPAQLSRERSF. Glutamate 47 carries the 4-carboxyglutamate modification. The residue at position 67 (aspartate 67) is an Aspartic acid 1-amide. Residues 68–85 constitute a propeptide that is removed on maturation; that stretch reads KRDVVSPRIRRRKRSKAM.

The protein belongs to the conotoxin J superfamily. Contains 2 disulfide bonds. Expressed by the venom duct.

The protein resides in the secreted. Its function is as follows. Causes scratching in mice. This is Scratcher peptide from Conus geographus (Geography cone).